The following is a 272-amino-acid chain: HMP-PP phosphatase (272 aa).

Catalysis depends on aspartate 8, which acts as the Nucleophile. Positions 8, 10, and 212 each coordinate Mg(2+).

Belongs to the HAD-like hydrolase superfamily. Cof family. The cofactor is Mg(2+).

The catalysed reaction is 4-amino-2-methyl-5-(diphosphooxymethyl)pyrimidine + H2O = 4-amino-2-methyl-5-(phosphooxymethyl)pyrimidine + phosphate + H(+). Functionally, catalyzes the hydrolysis of 4-amino-2-methyl-5-hydroxymethylpyrimidine pyrophosphate (HMP-PP) to 4-amino-2-methyl-5-hydroxymethylpyrimidine phosphate (HMP-P). The sequence is that of HMP-PP phosphatase from Klebsiella pneumoniae (strain 342).